A 155-amino-acid polypeptide reads, in one-letter code: Large ribosomal subunit protein eL24 (155 aa).

The segment at 92–155 (AKRNMKPEVR…KSAPRVGGKR (64 aa)) is disordered. Over residues 96–117 (MKPEVRKAQRDQAIKAAKEQKK) the composition is skewed to basic and acidic residues. The span at 124–133 (KASAPAPKAK) shows a compositional bias: low complexity.

Belongs to the eukaryotic ribosomal protein eL24 family.

The chain is Large ribosomal subunit protein eL24 (RpL24) from Spodoptera frugiperda (Fall armyworm).